Reading from the N-terminus, the 121-residue chain is Cytochrome B5-like protein (121 aa).

A helical transmembrane segment spans residues Met1–Gly21. Residues Arg24–Tyr49 are disordered. Over residues Thr26–Ser36 the composition is skewed to basic and acidic residues. Residues Pro46–His121 enclose the Cytochrome b5 heme-binding domain. His81 and His104 together coordinate heme.

Belongs to the cytochrome b5 family.

The protein localises to the membrane. This is Cytochrome B5-like protein from Arabidopsis thaliana (Mouse-ear cress).